The primary structure comprises 103 residues: Integration host factor subunit beta (103 aa).

It belongs to the bacterial histone-like protein family. In terms of assembly, heterodimer of an alpha and a beta chain.

Its function is as follows. This protein is one of the two subunits of integration host factor, a specific DNA-binding protein that functions in genetic recombination as well as in transcriptional and translational control. The protein is Integration host factor subunit beta of Bradyrhizobium sp. (strain BTAi1 / ATCC BAA-1182).